The sequence spans 177 residues: Large ribosomal subunit protein uL6 (177 aa).

The protein belongs to the universal ribosomal protein uL6 family. Part of the 50S ribosomal subunit.

Its function is as follows. This protein binds to the 23S rRNA, and is important in its secondary structure. It is located near the subunit interface in the base of the L7/L12 stalk, and near the tRNA binding site of the peptidyltransferase center. This is Large ribosomal subunit protein uL6 from Shewanella amazonensis (strain ATCC BAA-1098 / SB2B).